The primary structure comprises 227 residues: Claudin-15 (227 aa).

A topological domain (cytoplasmic) is located at residue methionine 1. Residues 2-24 traverse the membrane as a helical segment; the sequence is SIAVETFGFFMSALGLLMLGVTL. At 25-74 the chain is on the extracellular side; it reads PNSYWRVSTVHGNVITTNTIFENLWYSCATDSLGVSNCWDFPSMLALSGY. Cysteine 52 and cysteine 62 are joined by a disulfide. Residues 75–99 traverse the membrane as a helical segment; the sequence is VQGCRALMITAILLGFLGLFLGMVG. The Cytoplasmic segment spans residues 100–115; it reads LRCTNVGNIDLSRKAK. Serine 111 carries the phosphoserine modification. A helical membrane pass occupies residues 116–140; sequence LLAIAGAFHILAGACGMVAISWYAV. Residues 141–159 are Extracellular-facing; it reads NITTDFFNPLYVGTKYELG. The important for the formation of tight-junction strand-like structures stretch occupies residues 146–147; sequence FF. A helical transmembrane segment spans residues 160 to 182; the sequence is SALYLGWSASLLSILGGICVFST. Residues 183–227 are Cytoplasmic-facing; it reads CCCDSKEDPATRVGLPYKPSTVVTARATSDESDVSFGKYGKNAYV. Residues serine 211, serine 214, and serine 217 each carry the phosphoserine modification.

It belongs to the claudin family. As to quaternary structure, can form homo- and heteropolymeric tight junction strands. In terms of processing, palmitoylated. As to expression, detected in kidney, jejunum and colon (at protein level).

It is found in the cell junction. The protein resides in the tight junction. It localises to the cell membrane. The enzyme catalyses Na(+)(in) = Na(+)(out). It catalyses the reaction K(+)(in) = K(+)(out). The catalysed reaction is Cs(+)(in) = Cs(+)(out). It carries out the reaction Rb(+)(in) = Rb(+)(out). The enzyme catalyses Li(+)(in) = Li(+)(out). It catalyses the reaction NH4(+)(in) = NH4(+)(out). The catalysed reaction is methylamine(out) = methylamine(in). It carries out the reaction H2O(in) = H2O(out). In terms of biological role, forms paracellular channels: polymerizes in tight junction strands with cation- and water-selective channels through the strands, conveying epithelial permeability in a process known as paracellular tight junction permeability. In intestinal epithelium, allows for sodium and water fluxes from the peritoneal side to the lumen of the intestine to regulate nutrient absorption and intestinal morphogenesis. This is Claudin-15 from Rattus norvegicus (Rat).